The following is a 332-amino-acid chain: D-lactate dehydrogenase (332 aa).

NAD(+) contacts are provided by residues 155–156, aspartate 175, 206–207, asparagine 212, 233–235, and aspartate 259; these read RI, VP, and FAR. The active site involves arginine 235. Glutamate 264 is an active-site residue. Histidine 296 (proton donor) is an active-site residue.

This sequence belongs to the D-isomer specific 2-hydroxyacid dehydrogenase family.

It catalyses the reaction (R)-lactate + NAD(+) = pyruvate + NADH + H(+). The chain is D-lactate dehydrogenase (ldhD) from Lactiplantibacillus plantarum (strain ATCC BAA-793 / NCIMB 8826 / WCFS1) (Lactobacillus plantarum).